Consider the following 205-residue polypeptide: Holliday junction branch migration complex subunit RuvA (205 aa).

The tract at residues 1–64 is domain I; sequence MIGKLKGVVD…EDMIRLYGFR (64 aa). Residues 65-143 form a domain II region; sequence SDAEREWFRL…AFAPVDPALI (79 aa). The interval 144-152 is flexible linker; that stretch reads RLAGAVEER. The tract at residues 153-205 is domain III; that stretch reads TAPQPVADAISALVNLGYPQIQASAAVAAALQGAGEGAEAKTLIRLGLRELAR.

It belongs to the RuvA family. In terms of assembly, homotetramer. Forms an RuvA(8)-RuvB(12)-Holliday junction (HJ) complex. HJ DNA is sandwiched between 2 RuvA tetramers; dsDNA enters through RuvA and exits via RuvB. An RuvB hexamer assembles on each DNA strand where it exits the tetramer. Each RuvB hexamer is contacted by two RuvA subunits (via domain III) on 2 adjacent RuvB subunits; this complex drives branch migration. In the full resolvosome a probable DNA-RuvA(4)-RuvB(12)-RuvC(2) complex forms which resolves the HJ.

It localises to the cytoplasm. Functionally, the RuvA-RuvB-RuvC complex processes Holliday junction (HJ) DNA during genetic recombination and DNA repair, while the RuvA-RuvB complex plays an important role in the rescue of blocked DNA replication forks via replication fork reversal (RFR). RuvA specifically binds to HJ cruciform DNA, conferring on it an open structure. The RuvB hexamer acts as an ATP-dependent pump, pulling dsDNA into and through the RuvAB complex. HJ branch migration allows RuvC to scan DNA until it finds its consensus sequence, where it cleaves and resolves the cruciform DNA. In Methylobacterium nodulans (strain LMG 21967 / CNCM I-2342 / ORS 2060), this protein is Holliday junction branch migration complex subunit RuvA.